We begin with the raw amino-acid sequence, 393 residues long: NAD(P)H-quinone oxidoreductase subunit H, chloroplastic (393 aa).

The protein belongs to the complex I 49 kDa subunit family. As to quaternary structure, NDH is composed of at least 16 different subunits, 5 of which are encoded in the nucleus.

The protein localises to the plastid. It localises to the chloroplast thylakoid membrane. The catalysed reaction is a plastoquinone + NADH + (n+1) H(+)(in) = a plastoquinol + NAD(+) + n H(+)(out). The enzyme catalyses a plastoquinone + NADPH + (n+1) H(+)(in) = a plastoquinol + NADP(+) + n H(+)(out). NDH shuttles electrons from NAD(P)H:plastoquinone, via FMN and iron-sulfur (Fe-S) centers, to quinones in the photosynthetic chain and possibly in a chloroplast respiratory chain. The immediate electron acceptor for the enzyme in this species is believed to be plastoquinone. Couples the redox reaction to proton translocation, and thus conserves the redox energy in a proton gradient. The protein is NAD(P)H-quinone oxidoreductase subunit H, chloroplastic of Oenothera argillicola (Appalachian evening primrose).